A 269-amino-acid polypeptide reads, in one-letter code: Aquaporin-1 (269 aa).

Residues 1–11 (MASEIKKKLFW) are Cytoplasmic-facing. Residues 12–29 (RAVVAEFLAMTLFVFISI) traverse the membrane as a helical segment. Topologically, residues 30-46 (GSALGFNYPLERNQTLV) are extracellular. The helical transmembrane segment at 47 to 65 (QDNVKVSLAFGLSIATLAQ) threads the bilayer. Over 66-68 (SVG) the chain is Cytoplasmic. An intramembrane segment occupies 69–82 (HISGAHLNPAVTLG). An NPA 1 motif is present at residues 76 to 78 (NPA). Residues 83–90 (LLLSCQIS) lie on the Cytoplasmic side of the membrane. A helical transmembrane segment spans residues 91-109 (ILRAVMYIIAQCVGAIVAT). Topologically, residues 110–133 (AILSGITSSLVDNSLGRNDLAHGV) are extracellular. Residues 134 to 153 (NSGQGLGIEIIGTLQLVLCV) traverse the membrane as a helical segment. The Cytoplasmic segment spans residues 154–163 (LATTDRRRRD). Residues 164-181 (LGGSAPLAIGLSVALGHL) traverse the membrane as a helical segment. Residues 182-186 (LAIDY) are Extracellular-facing. An intramembrane segment occupies 187–199 (TGCGINPARSFGS). Residues 192–194 (NPA) carry the NPA 2 motif. Over 200–206 (AVLTRNF) the chain is Extracellular. An N-linked (GlcNAc...) asparagine glycan is attached at Asn205. The chain crosses the membrane as a helical span at residues 207 to 224 (SNHWIFWVGPFIGGALAV). Over 225 to 269 (LIYDFILAPRSSDFTDRMKVWTSGQVEEYDLDADDINSRVEMKPK) the chain is Cytoplasmic. The residue at position 247 (Ser247) is a Phosphoserine. Tyr253 bears the Phosphotyrosine mark. Ser262 carries the phosphoserine modification.

It belongs to the MIP/aquaporin (TC 1.A.8) family. As to quaternary structure, homotetramer; each monomer provides an independent water pore. Component of the ankyrin-1 complex in the erythrocyte, composed of ANK1, RHCE, RHAG, SLC4A1, EPB42, GYPA, GYPB and AQP1. Interacts with EPHB2; involved in endolymph production in the inner ear. Identified in a complex with STOM. Interacts (via the N-terminal) with ANK1 (via ANK 1-5 repeats). Interacts (via the C-terminal) with EPB42. Detected in erythrocytes (at protein level). In the kidney, expressed on luminal and basal borders of proximal tubules and in the thin limb of Henle's loop (at protein level).

It localises to the cell membrane. It catalyses the reaction H2O(in) = H2O(out). The catalysed reaction is nitric oxide(out) = nitric oxide(in). The enzyme catalyses CO2(out) = CO2(in). It carries out the reaction glycerol(in) = glycerol(out). It catalyses the reaction H2O2(out) = H2O2(in). The catalysed reaction is K(+)(in) = K(+)(out). The enzyme catalyses Na(+)(in) = Na(+)(out). Its function is as follows. Forms a water channel that facilitates the transport of water across cell membranes, playing a crucial role in water homeostasis in various tissues. Could also be permeable to small solutes including hydrogen peroxide, glycerol and gases such as amonnia (NH3), nitric oxide (NO) and carbon dioxide (CO2). Recruited to the ankyrin-1 complex, a multiprotein complex of the erythrocyte membrane, it could be part of a CO2 metabolon, linking facilitated diffusion of CO2 across the membrane, anion exchange of Cl(-)/HCO3(-) and interconversion of dissolved CO2 and carbonic acid in the cytosol. In vitro, it shows non-selective gated cation channel activity and may be permeable to cations like K(+) and Na(+) in vivo. The chain is Aquaporin-1 from Mus musculus (Mouse).